The chain runs to 355 residues: Vi polysaccharide export protein VexA/TviF (355 aa).

The first 16 residues, M1 to G16, serve as a signal peptide directing secretion. C17 carries the N-palmitoyl cysteine lipid modification. The S-diacylglycerol cysteine moiety is linked to residue C17.

The protein belongs to the BexD/CtrA/VexA family.

Its subcellular location is the cell outer membrane. May form an ATP-driven capsule polysaccharide export apparatus, in association with the VexB, VexC and VexD proteins. May function as a membrane anchor for the polysaccharide. Possible porin properties. In Salmonella typhi, this protein is Vi polysaccharide export protein VexA/TviF (vexA).